We begin with the raw amino-acid sequence, 283 residues long: Protease HtpX homolog (283 aa).

Helical transmembrane passes span T7–G27 and Q29–S49. Position 131 (H131) interacts with Zn(2+). The active site involves E132. H135 contributes to the Zn(2+) binding site. A run of 2 helical transmembrane segments spans residues I146–G166 and I177–I197. E202 contributes to the Zn(2+) binding site.

The protein belongs to the peptidase M48B family. The cofactor is Zn(2+).

It localises to the cell inner membrane. This is Protease HtpX homolog from Methylibium petroleiphilum (strain ATCC BAA-1232 / LMG 22953 / PM1).